A 140-amino-acid chain; its full sequence is Small ribosomal subunit protein uS12 (140 aa).

Residue Asp-102 is modified to 3-methylthioaspartic acid.

The protein belongs to the universal ribosomal protein uS12 family. In terms of assembly, part of the 30S ribosomal subunit. Contacts proteins S8 and S17. May interact with IF1 in the 30S initiation complex.

Its function is as follows. With S4 and S5 plays an important role in translational accuracy. Functionally, interacts with and stabilizes bases of the 16S rRNA that are involved in tRNA selection in the A site and with the mRNA backbone. Located at the interface of the 30S and 50S subunits, it traverses the body of the 30S subunit contacting proteins on the other side and probably holding the rRNA structure together. The combined cluster of proteins S8, S12 and S17 appears to hold together the shoulder and platform of the 30S subunit. The chain is Small ribosomal subunit protein uS12 from Bacillus cereus (strain G9842).